The following is a 219-amino-acid chain: Probable transcriptional regulator flp (219 aa).

The 69-residue stretch at 144 to 212 (DSINVRLTHY…GKQVRILNAE (69 aa)) folds into the HTH crp-type domain. The H-T-H motif DNA-binding region spans 191 to 210 (KRLAEEKLIERSGKQVRILN).

The polypeptide is Probable transcriptional regulator flp (flp) (Lacticaseibacillus casei (Lactobacillus casei)).